Reading from the N-terminus, the 128-residue chain is MGIPLRIDARSTALVAVGGAVGAVLRYTVAQAIAGPLGTLAANAAGSLALGALAYEAAATDSVLSADAHTLLGTGCLSAFTTYSTFAVQTAGLAPRWMAANVATTYALGFAGVLVGRAIAATARGDRR.

The next 4 helical transmembrane spans lie at 13 to 35, 40 to 59, 71 to 93, and 97 to 119; these read ALVAVGGAVGAVLRYTVAQAIAG, LAANAAGSLALGALAYEAAA, LLGTGCLSAFTTYSTFAVQTAGL, and WMAANVATTYALGFAGVLVGRAI.

This sequence belongs to the fluoride channel Fluc/FEX (TC 1.A.43) family.

It is found in the cell membrane. The enzyme catalyses fluoride(in) = fluoride(out). Fluoride-specific ion channel. Important for reducing fluoride concentration in the cell, thus reducing its toxicity. The chain is Fluoride-specific ion channel FluC 2 from Halobacterium salinarum (strain ATCC 700922 / JCM 11081 / NRC-1) (Halobacterium halobium).